The chain runs to 229 residues: uncharacterized protein (229 aa).

The 228-residue stretch at 2–229 (LTLNNISKSY…LDERGDISHA (228 aa)) folds into the ABC transporter domain. Residue 38-45 (GPSGSGKS) coordinates ATP.

The protein belongs to the ABC transporter superfamily.

This is an uncharacterized protein from Bacillus subtilis (strain 168).